Here is a 522-residue protein sequence, read N- to C-terminus: ATP synthase subunit alpha, mitochondrial (522 aa).

Residue Gly172–Thr179 coordinates ATP.

Belongs to the ATPase alpha/beta chains family. As to quaternary structure, F-type ATPases have 2 components, CF(1) - the catalytic core - and CF(0) - the membrane proton channel. CF(1) has five subunits: alpha(3), beta(3), gamma(1), delta(1), epsilon(1). CF(0) has three main subunits: a, b and c.

It is found in the mitochondrion. The protein localises to the mitochondrion inner membrane. Mitochondrial membrane ATP synthase (F(1)F(0) ATP synthase or Complex V) produces ATP from ADP in the presence of a proton gradient across the membrane which is generated by electron transport complexes of the respiratory chain. F-type ATPases consist of two structural domains, F(1) - containing the extramembraneous catalytic core, and F(0) - containing the membrane proton channel, linked together by a central stalk and a peripheral stalk. During catalysis, ATP synthesis in the catalytic domain of F(1) is coupled via a rotary mechanism of the central stalk subunits to proton translocation. Subunits alpha and beta form the catalytic core in F(1). Rotation of the central stalk against the surrounding alpha(3)beta(3) subunits leads to hydrolysis of ATP in three separate catalytic sites on the beta subunits. Subunit alpha does not bear the catalytic high-affinity ATP-binding sites. This is ATP synthase subunit alpha, mitochondrial (ATP1) from Acanthamoeba castellanii (Amoeba).